The primary structure comprises 362 residues: Peptide chain release factor 1 (362 aa).

Gln-237 is modified (N5-methylglutamine).

It belongs to the prokaryotic/mitochondrial release factor family. Post-translationally, methylated by PrmC. Methylation increases the termination efficiency of RF1.

It localises to the cytoplasm. In terms of biological role, peptide chain release factor 1 directs the termination of translation in response to the peptide chain termination codons UAG and UAA. The chain is Peptide chain release factor 1 from Aliivibrio salmonicida (strain LFI1238) (Vibrio salmonicida (strain LFI1238)).